The following is an 84-amino-acid chain: MAELSLAELREIMRQSLGEDEVPDLADADTVTFEDLGLDSLAVLETVNHIERTYGVKLPEEELAEVRTPHSMLIFVNERLRAAA.

In terms of domain architecture, Carrier spans 3 to 80; the sequence is ELSLAELREI…SMLIFVNERL (78 aa). S40 carries the O-(pantetheine 4'-phosphoryl)serine modification.

Its pathway is antibiotic biosynthesis; daunorubicin biosynthesis. It functions in the pathway antibiotic biosynthesis; carminomycin biosynthesis. The protein operates within antibiotic biosynthesis; rhodomycin biosynthesis. It participates in antibiotic biosynthesis; aclacinomycin biosynthesis. Involved in the biosynthesis of aklanonate which is an important precursor common to the formation of the clinically significant anthracyclines such as carminomycin, daunorubicin (daunomycin), rhodomycin, aclacinomycin T (aklavin) and aclacinomycin A (aclarubicin). These compounds are aromatic polyketide antibiotics that exhibit high cytotoxicity and are widely applied in the chemotherapy of a variety of cancers. The polypeptide is Anthracycline acyl carrier protein DpsG (dpsG) (Streptomyces peucetius).